A 97-amino-acid polypeptide reads, in one-letter code: uncharacterized protein (97 aa).

Residues 27–50 (IGESEDKTNSRGQPATMKEDEVED) are disordered.

This is an uncharacterized protein from Caldicellulosiruptor saccharolyticus (Caldocellum saccharolyticum).